The primary structure comprises 956 residues: Chromatin assembly factor 1 subunit A (956 aa).

The interval 1-49 (MLEELECGAPGARGAATAMDCKDRPAFPVKKLIQARLPFKRLNLVPKGK) is binds to PCNA. The segment at 1-314 (MLEELECGAP…QHSSTSPFPT (314 aa)) is binds to CBX1 chromo shadow domain. Disordered regions lie at residues 45 to 65 (VPKG…QSKS) and 122 to 155 (DSNE…EDTG). Residues 56–65 (DQGTSVQSKS) are compositionally biased toward polar residues. Phosphoserine is present on residues Ser65, Ser123, Ser138, Ser141, and Ser143. A Glycyl lysine isopeptide (Lys-Gly) (interchain with G-Cter in SUMO1); alternate cross-link involves residue Lys182. A Glycyl lysine isopeptide (Lys-Gly) (interchain with G-Cter in SUMO2); alternate cross-link involves residue Lys182. The disordered stretch occupies residues 188–222 (VGCGGAGRRGDSQECSPRSCPELTSGPRMCPRKEQ). A phosphoserine mark is found at Ser206 and Ser224. The PxVxL motif signature appears at 233-246 (FKGKVPMVVLQDIL). Disordered stretches follow at residues 250-432 (PPQI…KRLR) and 599-639 (DSDE…VPHG). Composition is skewed to low complexity over residues 282 to 296 (LSHS…TSSP) and 307 to 317 (SSTSPFPTSTP). Ser310 is modified (phosphoserine). The segment covering 329–432 (STEKNKLRLQ…RKKEEEKRLR (104 aa)) has biased composition (basic and acidic residues). 2 stretches are compositionally biased toward acidic residues: residues 599-610 (DSDEEWEEEEPG) and 618-633 (GDDD…EDDG). Residues 642-678 (SEDEGVTEECADPENHKVRQKLKAKEWDEFLAKGKRF) form a necessary for homodimerization and competence for chromatin assembly region. The binds to p60 stretch occupies residues 660 to 956 (RQKLKAKEWD…TLTASPLGAS (297 aa)). Residue Thr722 is modified to Phosphothreonine. Residues 765 to 790 (LLSNHTGSPRSPSTTYLHTPTPSEDA) form a disordered region. The segment covering 767 to 786 (SNHTGSPRSPSTTYLHTPTP) has biased composition (polar residues). Residues Ser772, Ser775, and Ser803 each carry the phosphoserine modification. Disordered stretches follow at residues 844 to 873 (SVPS…KRKS) and 933 to 956 (SGAG…LGAS). The span at 855-866 (SVPSTGPSQGTP) shows a compositional bias: polar residues. The residue at position 865 (Thr865) is a Phosphothreonine. 3 positions are modified to phosphoserine: Ser868, Ser873, and Ser951.

This sequence belongs to the CHAF1A family. In terms of assembly, homodimer. Part of the CAF-1 complex that contains RBBP4, CHAF1B and CHAF1A. CHAF1A binds directly to CHAF1B. Only minor amounts of RBBP4 are complexed with CHAF1A and CHAF1B in G1 phase. Interacts with PCNA; the interaction is direct. Interacts (via the PxVxL motif) with CBX5; the interaction is direct. Interacts with MBD1. Interacts with histones H3.1, H3.2 and H3.1t.

It localises to the nucleus. Its function is as follows. Acts as a component of the histone chaperone complex chromatin assembly factor 1 (CAF-1), which assembles histone octamers onto DNA during replication and repair. CAF-1 performs the first step of the nucleosome assembly process, bringing newly synthesized histones H3 and H4 to replicating DNA; histones H2A/H2B can bind to this chromatin precursor subsequent to DNA replication to complete the histone octamer. It may play a role in heterochromatin maintenance in proliferating cells by bringing newly synthesized cbx proteins to heterochromatic DNA replication foci. The polypeptide is Chromatin assembly factor 1 subunit A (Homo sapiens (Human)).